The following is a 597-amino-acid chain: Phosphoinositide phosphatase SAC7 (597 aa).

In terms of domain architecture, SAC spans 130 to 458 (LSVAEKTTGL…GDEISIQYSG (329 aa)). The Phosphatase catalytic core motif lies at 393–404 (RSNCIDCLDRTN). Helical transmembrane passes span 528–548 (AVAN…FATM) and 559–579 (HKHL…AALV).

In terms of tissue distribution, ubiquitous.

Its subcellular location is the endoplasmic reticulum membrane. It localises to the cytoplasmic vesicle membrane. In terms of biological role, phosphoinositide phosphatase that preferentially hydrolyzes PtdIns(4)P. Regulates the accumulation of PtdIns(4)P on membrane compartments at the tips of growing root hairs leading to proper root hair development. The polypeptide is Phosphoinositide phosphatase SAC7 (SAC7) (Arabidopsis thaliana (Mouse-ear cress)).